Reading from the N-terminus, the 429-residue chain is TNFAIP3-interacting protein 2 (429 aa).

The residue at position 7 (serine 7) is a Phosphoserine. Residues 29–117 (QRLRRLQDQL…MQQLLSQPQH (89 aa)) are a coiled coil. Over residues 177–195 (HAQRNVGERSPDQSEHTDG) the composition is skewed to basic and acidic residues. Positions 177-199 (HAQRNVGERSPDQSEHTDGHTSV) are disordered. 2 coiled-coil regions span residues 196–226 (HTSV…LNAK) and 255–340 (ELMR…QVSW). Residues 289–347 (RDAALERVQMLEQQILAYKDDFMSERADRERAQSRIQELEEKVASLLHQVSWRQDSREP) form a ubiquitin-binding domain (UBD) region. Residues 372-400 (PGGWRPGTGSQQPEPPAEGGHPGAAQRGQ) form a disordered region. Residues 388-397 (AEGGHPGAAQ) show a composition bias toward low complexity. A CCHC NOA-type zinc finger spans residues 397–429 (QRGQGDLQCPHCLQCFSDEQGEELLRHVAECCQ). Zn(2+) contacts are provided by cysteine 405, cysteine 408, histidine 423, and cysteine 427.

Interacts with STK11/LKB1, TNFAIP3, IKBKG, NFKB1, MAP3K8, TEK, RIPK1, CHUK, IKBKB and SMARCD1. Interacts with polyubiquitin. As to quaternary structure, (Microbial infection) Interacts with severe fever with thrombocytopenia syndrome virus (SFTSV) NSs; this interaction promotes TPL2 complex formation and signaling activity leading to IL-10 production. Post-translationally, in vitro phosphorylated by CHUK. Ubiquitinated; undergoes 'Lys-48'-linked polyubiquitination probably leading to constitutive proteasomal degradation which can be impaired by IKK-A/CHUK or IKBKB probably involving deubiquitination. Deubiquitinated by USP35; leading to stabilization and inhibition of TNFalpha-induced NF-kappa-B activation. As to expression, ubiquitously expressed in all tissues examined.

The protein resides in the cytoplasm. It is found in the nucleus. In terms of biological role, inhibits NF-kappa-B activation by blocking the interaction of RIPK1 with its downstream effector NEMO/IKBKG. Forms a ternary complex with NFKB1 and MAP3K8 but appears to function upstream of MAP3K8 in the TLR4 signaling pathway that regulates MAP3K8 activation. Involved in activation of the MEK/ERK signaling pathway during innate immune response; this function seems to be stimulus- and cell type specific. Required for stability of MAP3K8. Involved in regulation of apoptosis in endothelial cells; promotes TEK agonist-stimulated endothelial survival. May act as transcriptional coactivator when translocated to the nucleus. Enhances CHUK-mediated NF-kappa-B activation involving NF-kappa-B p50-p65 and p50-c-Rel complexes. In Homo sapiens (Human), this protein is TNFAIP3-interacting protein 2.